A 90-amino-acid chain; its full sequence is Probable Fe(2+)-trafficking protein (90 aa).

Belongs to the Fe(2+)-trafficking protein family.

Its function is as follows. Could be a mediator in iron transactions between iron acquisition and iron-requiring processes, such as synthesis and/or repair of Fe-S clusters in biosynthetic enzymes. This chain is Probable Fe(2+)-trafficking protein, found in Delftia acidovorans (strain DSM 14801 / SPH-1).